A 353-amino-acid polypeptide reads, in one-letter code: S-adenosylmethionine:tRNA ribosyltransferase-isomerase (353 aa).

It belongs to the QueA family. In terms of assembly, monomer.

It is found in the cytoplasm. It catalyses the reaction 7-aminomethyl-7-carbaguanosine(34) in tRNA + S-adenosyl-L-methionine = epoxyqueuosine(34) in tRNA + adenine + L-methionine + 2 H(+). It participates in tRNA modification; tRNA-queuosine biosynthesis. Its function is as follows. Transfers and isomerizes the ribose moiety from AdoMet to the 7-aminomethyl group of 7-deazaguanine (preQ1-tRNA) to give epoxyqueuosine (oQ-tRNA). The polypeptide is S-adenosylmethionine:tRNA ribosyltransferase-isomerase (Dinoroseobacter shibae (strain DSM 16493 / NCIMB 14021 / DFL 12)).